The sequence spans 506 residues: Secreted RxLR effector protein 134 (506 aa).

A signal peptide spans 1 to 19 (MQGAYCVAVALLIAASGQA). The short motif at 50–71 (RVLQVSHYPKDDLMLLAGNEER) is the RxLR-dEER element.

The protein belongs to the RxLR effector family.

It is found in the secreted. Its subcellular location is the host nucleus. Secreted effector that completely suppresses the host cell death induced by cell death-inducing proteins. This Plasmopara viticola (Downy mildew of grapevine) protein is Secreted RxLR effector protein 134.